The chain runs to 288 residues: Shikimate dehydrogenase (NADP(+)) (288 aa).

Shikimate-binding positions include S21–S23 and T68. The Proton acceptor role is filled by K72. E84 provides a ligand contact to NADP(+). Shikimate contacts are provided by N93 and D108. NADP(+) contacts are provided by residues G132–A136 and L230. Residue Y232 participates in shikimate binding. Position 253 (G253) interacts with NADP(+).

This sequence belongs to the shikimate dehydrogenase family. In terms of assembly, homodimer.

The enzyme catalyses shikimate + NADP(+) = 3-dehydroshikimate + NADPH + H(+). Its pathway is metabolic intermediate biosynthesis; chorismate biosynthesis; chorismate from D-erythrose 4-phosphate and phosphoenolpyruvate: step 4/7. Involved in the biosynthesis of the chorismate, which leads to the biosynthesis of aromatic amino acids. Catalyzes the reversible NADPH linked reduction of 3-dehydroshikimate (DHSA) to yield shikimate (SA). This is Shikimate dehydrogenase (NADP(+)) from Gloeothece citriformis (strain PCC 7424) (Cyanothece sp. (strain PCC 7424)).